Here is a 123-residue protein sequence, read N- to C-terminus: Large ribosomal subunit protein bL19 (123 aa).

The protein belongs to the bacterial ribosomal protein bL19 family.

Functionally, this protein is located at the 30S-50S ribosomal subunit interface and may play a role in the structure and function of the aminoacyl-tRNA binding site. This Ureaplasma parvum serovar 3 (strain ATCC 27815 / 27 / NCTC 11736) protein is Large ribosomal subunit protein bL19.